We begin with the raw amino-acid sequence, 493 residues long: MKSRLTALPDWDPALLQQLGLPIKRVEADSRRVLPGDVFLACRGEYADGRDFIPAALEKGAAAVLWDEADGFAWKAEWQAPNLAVPNLRERAGIVAAHVLGLPSRDLTVVGITGTNGKTSISHWLAQAFSLLGQKAALIGTVGNGFYGHLTETTHTTPDPVTVQQKLAEYRRQGAHVVTMEVSSHGLDQFRVNGVEFATAVFTNLTRDHLDYHGSMEAYGESKKKLFFWEGLKHAVINADDAFGRQLAAGIDPKQTRVVTYGLEQGDVRPLALAATLEGLQLTVATPWGTVDVRTGLVGRFNAANLLACLATLCVNGVSLQDAAAVMARIQPARGRMQSVGGAHEPLVVIDYAHTPDALEKALATLSEIRPAGGRLFCVFGCGGDRDPGKRPMMGAIAEKHADVAVLTSDNPRSEDPQAIIRDVLAGMDAARAHVEADREAAIHWAVAQARVGDVVLVAGKGHEEYQDIAGVKRPFSDFRVAEEALTAWGKRP.

Position 30 (Ser30) interacts with UDP-N-acetyl-alpha-D-muramoyl-L-alanyl-D-glutamate. 114–120 (GTNGKTS) contacts ATP. UDP-N-acetyl-alpha-D-muramoyl-L-alanyl-D-glutamate is bound by residues 156 to 157 (TT), Ser183, Gln189, and Arg191. N6-carboxylysine is present on Lys223. Residues Arg386, 410–413 (DNPR), Gly460, and Glu464 contribute to the meso-2,6-diaminopimelate site. The Meso-diaminopimelate recognition motif signature appears at 410–413 (DNPR).

The protein belongs to the MurCDEF family. MurE subfamily. Requires Mg(2+) as cofactor. Carboxylation is probably crucial for Mg(2+) binding and, consequently, for the gamma-phosphate positioning of ATP.

It localises to the cytoplasm. The enzyme catalyses UDP-N-acetyl-alpha-D-muramoyl-L-alanyl-D-glutamate + meso-2,6-diaminopimelate + ATP = UDP-N-acetyl-alpha-D-muramoyl-L-alanyl-gamma-D-glutamyl-meso-2,6-diaminopimelate + ADP + phosphate + H(+). It functions in the pathway cell wall biogenesis; peptidoglycan biosynthesis. In terms of biological role, catalyzes the addition of meso-diaminopimelic acid to the nucleotide precursor UDP-N-acetylmuramoyl-L-alanyl-D-glutamate (UMAG) in the biosynthesis of bacterial cell-wall peptidoglycan. The chain is UDP-N-acetylmuramoyl-L-alanyl-D-glutamate--2,6-diaminopimelate ligase from Chromobacterium violaceum (strain ATCC 12472 / DSM 30191 / JCM 1249 / CCUG 213 / NBRC 12614 / NCIMB 9131 / NCTC 9757 / MK).